Reading from the N-terminus, the 220-residue chain is Ribosome maturation factor RimP (220 aa).

Residues 173-220 (KKDKEERRQRKKARRRGEKGGVGDDGTAGEEQPDSAREGPARSASEGE) are disordered.

This sequence belongs to the RimP family.

It is found in the cytoplasm. Its function is as follows. Required for maturation of 30S ribosomal subunits. The sequence is that of Ribosome maturation factor RimP from Chelativorans sp. (strain BNC1).